The sequence spans 211 residues: Arginine exporter protein ArgO (211 aa).

6 consecutive transmembrane segments (helical) span residues 1–21 (MISY…PLGP), 37–57 (LMIA…GIFG), 68–88 (LLAL…FGAL), 111–131 (IIAT…DTFV), 147–167 (WFAL…ALLA), and 179–199 (AQRI…FQLA).

This sequence belongs to the LysE/ArgO transporter (TC 2.A.75) family.

The protein resides in the cell inner membrane. The enzyme catalyses L-arginine(in) = L-arginine(out). In terms of biological role, involved in the export of arginine. Important to control the intracellular level of arginine and the correct balance between arginine and lysine. This Salmonella paratyphi A (strain ATCC 9150 / SARB42) protein is Arginine exporter protein ArgO.